Consider the following 182-residue polypeptide: uncharacterized protein (182 aa).

Disordered stretches follow at residues 1-73 (MMSG…YRSL) and 105-182 (SMST…HLNR). Low complexity-rich tracts occupy residues 43–68 (RPSP…ETSS) and 105–121 (SMST…SPVT). Residues 122 to 131 (APAPPPPPTS) show a composition bias toward pro residues.

This is an uncharacterized protein from Caenorhabditis elegans.